The primary structure comprises 1188 residues: NF-X1-type zinc finger protein NFXL1 (1188 aa).

The span at 1-15 (MSFQVRRDRSDDRSH) shows a compositional bias: basic and acidic residues. 2 disordered regions span residues 1-52 (MSFQ…ETLD) and 65-195 (QHNA…VAKE). Composition is skewed to polar residues over residues 19-34 (HQQTWIPRNSSTSSVV) and 168-186 (ASGTLPDNRQRVASRTRPV). The RING-type; degenerate zinc-finger motif lies at 223–279 (CMICYDKVGRSANIWSCSSCYSIFHINCIKRWARAPTSVDLLAEKNQGDNWRCPGCQ). 9 consecutive NF-X1-type zinc fingers follow at residues 335-353 (CPHVCVLQCHPGPCPPCKA), 390-409 (CGRHQCERTCHVGPCDPCQV), 454-473 (CGNHFCSEVCHPGPCGDCDL), 513-532 (CRLHTCNEMCHAGDCPPCLV), 572-607 (CGRHRCSERCCPLLNGKKNDLSGDWDPHVCQIPCQK), 611-630 (CGQHSCESLCHSGHCPPCLE), 668-686 (CGHSDTHGCHFGDCPPCST), 721-751 (CGMHACARTCHPEPCDSFNESEAGMRVTCRQ), and 760-781 (CRHTCAALCHPSAPCPDLRCEF). The R3H domain maps to 894–963 (PKWVLAVEER…KRFTVVHVTA (70 aa)). Residues 1100 to 1188 (SDDSWGAEDS…VVDDWEKVCE (89 aa)) form a disordered region. Polar residues-rich tracts occupy residues 1126 to 1138 (AKSNSPIVTSVNR) and 1159 to 1169 (EESSSSKTTGK).

Belongs to the NFX1 family. Expressed in seedlings, roots, stems, leaves, buds, flowers and siliques.

It is found in the nucleus. It functions in the pathway protein modification; protein ubiquitination. Its function is as follows. Mediates E2-dependent ubiquitination. Confers resistance to osmotic stress such as high salinity. Promotes H(2)O(2) production. Negative regulator of some defense-related genes via an salicylic acid (SA)-dependent signaling pathway. Confers susceptibility to the compatible phytopathogen Pseudomonas syringae pv. tomato strain DC3000 (Pst DC3000). Mediates resistance to type A trichothecenes (phytotoxins produced by phytopathogenic fungi). The chain is NF-X1-type zinc finger protein NFXL1 (NFXL1) from Arabidopsis thaliana (Mouse-ear cress).